A 360-amino-acid chain; its full sequence is Phosphoserine aminotransferase (360 aa).

Residue Arg-42 coordinates L-glutamate. Residues 76-77 (AS), Trp-102, Thr-152, Asp-172, and Gln-195 contribute to the pyridoxal 5'-phosphate site. The residue at position 196 (Lys-196) is an N6-(pyridoxal phosphate)lysine. 237–238 (NT) contacts pyridoxal 5'-phosphate.

The protein belongs to the class-V pyridoxal-phosphate-dependent aminotransferase family. SerC subfamily. In terms of assembly, homodimer. It depends on pyridoxal 5'-phosphate as a cofactor.

It is found in the cytoplasm. It catalyses the reaction O-phospho-L-serine + 2-oxoglutarate = 3-phosphooxypyruvate + L-glutamate. The catalysed reaction is 4-(phosphooxy)-L-threonine + 2-oxoglutarate = (R)-3-hydroxy-2-oxo-4-phosphooxybutanoate + L-glutamate. The protein operates within amino-acid biosynthesis; L-serine biosynthesis; L-serine from 3-phospho-D-glycerate: step 2/3. In terms of biological role, catalyzes the reversible conversion of 3-phosphohydroxypyruvate to phosphoserine and of 3-hydroxy-2-oxo-4-phosphonooxybutanoate to phosphohydroxythreonine. In Bacillus cereus (strain ATCC 14579 / DSM 31 / CCUG 7414 / JCM 2152 / NBRC 15305 / NCIMB 9373 / NCTC 2599 / NRRL B-3711), this protein is Phosphoserine aminotransferase.